A 245-amino-acid chain; its full sequence is Cytochrome P450 CYP82H23 (245 aa).

This sequence belongs to the cytochrome P450 family. Requires heme as cofactor.

Its function is as follows. Probable heme-thiolate monooxygenase. This is Cytochrome P450 CYP82H23 from Panax ginseng (Korean ginseng).